A 699-amino-acid polypeptide reads, in one-letter code: Elongation factor G (699 aa).

A tr-type G domain is found at 8–288; the sequence is EDYRNFGIMA…AVVDYLPSPM (281 aa). Residues 17–24, 86–90, and 140–143 each bind GTP; these read AHIDAGKT, DTPGH, and NKMD.

Belongs to the TRAFAC class translation factor GTPase superfamily. Classic translation factor GTPase family. EF-G/EF-2 subfamily.

The protein localises to the cytoplasm. In terms of biological role, catalyzes the GTP-dependent ribosomal translocation step during translation elongation. During this step, the ribosome changes from the pre-translocational (PRE) to the post-translocational (POST) state as the newly formed A-site-bound peptidyl-tRNA and P-site-bound deacylated tRNA move to the P and E sites, respectively. Catalyzes the coordinated movement of the two tRNA molecules, the mRNA and conformational changes in the ribosome. The sequence is that of Elongation factor G from Rhizobium johnstonii (strain DSM 114642 / LMG 32736 / 3841) (Rhizobium leguminosarum bv. viciae).